The chain runs to 347 residues: NADH-ubiquinone oxidoreductase chain 2 (347 aa).

The next 10 helical transmembrane spans lie at 13 to 33 (IILGTMIVMTSSHWLLVWIGF), 59 to 79 (YFLTQATASMLLMLAVVTNLL), 96 to 116 (AVMTLALVMKLGLSPFHFWVP), 122 to 142 (IPLSSGLVLLTWQKLAPLSVL), 149 to 169 (VSPTLLLTVSLMSIAVGGWGG), 178 to 198 (ILAYSSIAHMGWMTAVLAYNP), 201 to 221 (TLLNLTLYILMTTTTFLLFMF), 247 to 267 (IMLSLGGLPPLTGFLPKWMII), 274 to 294 (ESLLLPTLMAMMALLSLYFYM), and 323 to 343 (VPLLPPMITLFTLALPLAPAL).

The protein belongs to the complex I subunit 2 family. Core subunit of respiratory chain NADH dehydrogenase (Complex I) which is composed of 45 different subunits. Interacts with TMEM242.

The protein localises to the mitochondrion inner membrane. The enzyme catalyses a ubiquinone + NADH + 5 H(+)(in) = a ubiquinol + NAD(+) + 4 H(+)(out). Functionally, core subunit of the mitochondrial membrane respiratory chain NADH dehydrogenase (Complex I) which catalyzes electron transfer from NADH through the respiratory chain, using ubiquinone as an electron acceptor. Essential for the catalytic activity and assembly of complex I. The protein is NADH-ubiquinone oxidoreductase chain 2 of Megaderma spasma (Lesser false vampire bat).